Here is a 46-residue protein sequence, read N- to C-terminus: Diuretic hormone class 1 (46 aa).

Residue isoleucine 46 is modified to Isoleucine amide.

It is found in the secreted. Regulation of fluid secretion. Stimulates primary urine secretion by Malpighian tubules and causes a dose-dependent stimulation of cAMP levels in the tubules. Has a greater effect on the transport of Na(+) then K(+) ions. In vitro, has synergistic effects with the smaller diuretic hormone DH(31) which co-occurs with it. This is Diuretic hormone class 1 from Diploptera punctata (Pacific beetle cockroach).